The sequence spans 471 residues: Ribosomal protein uS12 methylthiotransferase RimO (471 aa).

In terms of domain architecture, MTTase N-terminal spans 23–138 (PKIGFVSLGC…VMDAVHVHVP (116 aa)). [4Fe-4S] cluster is bound by residues Cys32, Cys68, Cys97, Cys169, Cys173, and Cys176. In terms of domain architecture, Radical SAM core spans 155–396 (LTPRHYAYLK…MAVAEAVSAE (242 aa)). In terms of domain architecture, TRAM spans 399–471 (RERVGAEMQV…QGHDLVGQPL (73 aa)).

It belongs to the methylthiotransferase family. RimO subfamily. [4Fe-4S] cluster serves as cofactor.

It is found in the cytoplasm. It catalyses the reaction L-aspartate(89)-[ribosomal protein uS12]-hydrogen + (sulfur carrier)-SH + AH2 + 2 S-adenosyl-L-methionine = 3-methylsulfanyl-L-aspartate(89)-[ribosomal protein uS12]-hydrogen + (sulfur carrier)-H + 5'-deoxyadenosine + L-methionine + A + S-adenosyl-L-homocysteine + 2 H(+). Its function is as follows. Catalyzes the methylthiolation of an aspartic acid residue of ribosomal protein uS12. The protein is Ribosomal protein uS12 methylthiotransferase RimO of Methylibium petroleiphilum (strain ATCC BAA-1232 / LMG 22953 / PM1).